Consider the following 374-residue polypeptide: uncharacterized protein (374 aa).

The helical transmembrane segment at 27–49 (AISPILALLIVLGVTIVVGAVFY) threads the bilayer.

It is found in the membrane. This is an uncharacterized protein from Methanocaldococcus jannaschii (strain ATCC 43067 / DSM 2661 / JAL-1 / JCM 10045 / NBRC 100440) (Methanococcus jannaschii).